Here is a 143-residue protein sequence, read N- to C-terminus: Large ribosomal subunit protein uL13 (143 aa).

Belongs to the universal ribosomal protein uL13 family. Part of the 50S ribosomal subunit.

In terms of biological role, this protein is one of the early assembly proteins of the 50S ribosomal subunit, although it is not seen to bind rRNA by itself. It is important during the early stages of 50S assembly. The polypeptide is Large ribosomal subunit protein uL13 (Geobacter sulfurreducens (strain ATCC 51573 / DSM 12127 / PCA)).